Consider the following 331-residue polypeptide: Methionyl-tRNA formyltransferase (331 aa).

111-114 (SLLP) lines the (6S)-5,6,7,8-tetrahydrofolate pocket.

It belongs to the Fmt family.

The enzyme catalyses L-methionyl-tRNA(fMet) + (6R)-10-formyltetrahydrofolate = N-formyl-L-methionyl-tRNA(fMet) + (6S)-5,6,7,8-tetrahydrofolate + H(+). Its function is as follows. Attaches a formyl group to the free amino group of methionyl-tRNA(fMet). The formyl group appears to play a dual role in the initiator identity of N-formylmethionyl-tRNA by promoting its recognition by IF2 and preventing the misappropriation of this tRNA by the elongation apparatus. The protein is Methionyl-tRNA formyltransferase of Thermosynechococcus vestitus (strain NIES-2133 / IAM M-273 / BP-1).